Consider the following 1431-residue polypeptide: Gag-Pol polyprotein (1431 aa).

Gly2 is lipidated: N-myristoyl glycine; by host. Positions 7–31 are interaction with Gp41; it reads ILRGGKLDAWERIKLKPGGKKHYMM. The segment at 8-43 is interaction with host CALM1; it reads LRGGKLDAWERIKLKPGGKKHYMMKHLVWASRELER. The interval 12–19 is interaction with host AP3D1; sequence KLDAWERI. The interval 14-33 is interaction with membrane phosphatidylinositol 4,5-bisphosphate and RNA; it reads DAWERIKLKPGGKKHYMMKH. The short motif at 16–22 is the Nuclear export signal element; it reads WERIKLK. The short motif at 26–32 is the Nuclear localization signal element; it reads KKHYMMK. An interaction with membrane phosphatidylinositol 4,5-bisphosphate region spans residues 73–77; it reads KELIS. The disordered stretch occupies residues 106–126; sequence EEQNKSQQKTQQAEAADKGKV. Position 130 is a phosphotyrosine; by host (Tyr130). The interval 187–225 is interaction with human PPIA/CYPA and NUP153; that stretch reads NTVGGHQAAMQMLKDTINEEAAEWDRLHPVHAGPVAPGQ. Residues 275–361 are dimerization/Multimerization of capsid protein p24; sequence YSPVSILDIK…GGPGHKARVL (87 aa). 2 consecutive CCHC-type zinc fingers follow at residues 387–404 and 408–425; these read IKCF…NCRA and KGCW…DCTE. The disordered stretch occupies residues 437–461; it reads FPQGEARKSSSEQNRANSPTRRELQ. A dimerization of protease region spans residues 485 to 489; sequence PQITL. Positions 504-573 constitute a Peptidase A2 domain; that stretch reads KEALLDTGAD…TPVNIIGRNM (70 aa). Asp509 serves as the catalytic For protease activity; shared with dimeric partner. Dimerization of protease regions lie at residues 533-539 and 572-584; these read GIGGFIK and NMLT…LNFP. The 191-residue stretch at 627–817 folds into the Reverse transcriptase domain; it reads EGKITKIGPE…PPFLWMGYEL (191 aa). 3 residues coordinate Mg(2+): Asp693, Asp768, and Asp769. The tract at residues 810–818 is RT 'primer grip'; the sequence is FLWMGYELH. Residues 981–997 carry the Tryptophan repeat motif motif; the sequence is WEAWWTDYWQATWIPEW. The RNase H type-1 domain maps to 1017 to 1140; it reads IAGAETFYVD…VDKLVSSGIR (124 aa). 4 residues coordinate Mg(2+): Asp1026, Glu1061, Asp1081, and Asp1132. The segment at 1146–1187 adopts an Integrase-type zinc-finger fold; that stretch reads DGINKAQEEHEKYHSNWRAMASEFNLPPIVAKEIVASCDKCQ. Residues His1155, His1159, Cys1183, and Cys1186 each coordinate Zn(2+). One can recognise an Integrase catalytic domain in the interval 1197 to 1347; that stretch reads VDCSPGIWQL…SAGERIIDII (151 aa). Residues Asp1207, Asp1259, and Glu1295 each coordinate Mg(2+). A DNA-binding region (integrase-type) is located at residues 1366-1413; sequence FRVYYRDSRDPIWKGPAKLLWKGEGAVVLQDNSDIKVVPRRKVKIIKD.

In terms of assembly, homotrimer; further assembles as hexamers of trimers. Interacts with gp41 (via C-terminus). Interacts with host CALM1; this interaction induces a conformational change in the Matrix protein, triggering exposure of the myristate group. Interacts with host AP3D1; this interaction allows the polyprotein trafficking to multivesicular bodies during virus assembly. Part of the pre-integration complex (PIC) which is composed of viral genome, matrix protein, Vpr and integrase. Homodimer; the homodimer further multimerizes as homohexamers or homopentamers. Interacts with human PPIA/CYPA; This interaction stabilizes the capsid. Interacts with human NUP153. Interacts with host PDZD8; this interaction stabilizes the capsid. Interacts with monkey TRIM5; this interaction destabilizes the capsid. As to quaternary structure, homodimer, whose active site consists of two apposed aspartic acid residues. In terms of assembly, heterodimer of p66 RT and p51 RT (RT p66/p51). Heterodimerization of RT is essential for DNA polymerase activity. The overall folding of the subdomains is similar in p66 RT and p51 RT but the spatial arrangements of the subdomains are dramatically different. Homotetramer; may further associate as a homohexadecamer. Part of the pre-integration complex (PIC) which is composed of viral genome, matrix protein, Vpr and integrase. Interacts with human SMARCB1/INI1 and human PSIP1/LEDGF isoform 1. Interacts with human KPNA3; this interaction might play a role in nuclear import of the pre-integration complex. Interacts with human NUP153; this interaction might play a role in nuclear import of the pre-integration complex. The cofactor is Mg(2+). In terms of processing, specific enzymatic cleavages by the viral protease yield mature proteins. The protease is released by autocatalytic cleavage. The polyprotein is cleaved during and after budding, this process is termed maturation. Proteolytic cleavage of p66 RT removes the RNase H domain to yield the p51 RT subunit. Nucleocapsid protein p7 might be further cleaved after virus entry. Tyrosine phosphorylated presumably in the virion by a host kinase. Phosphorylation is apparently not a major regulator of membrane association. Post-translationally, phosphorylated possibly by host MAPK1; this phosphorylation is necessary for Pin1-mediated virion uncoating. In terms of processing, methylated by host PRMT6, impairing its function by reducing RNA annealing and the initiation of reverse transcription.

Its subcellular location is the host cell membrane. It is found in the host endosome. The protein localises to the host multivesicular body. It localises to the virion membrane. The protein resides in the host nucleus. Its subcellular location is the host cytoplasm. It is found in the virion. The catalysed reaction is Specific for a P1 residue that is hydrophobic, and P1' variable, but often Pro.. It catalyses the reaction Endohydrolysis of RNA in RNA/DNA hybrids. Three different cleavage modes: 1. sequence-specific internal cleavage of RNA. Human immunodeficiency virus type 1 and Moloney murine leukemia virus enzymes prefer to cleave the RNA strand one nucleotide away from the RNA-DNA junction. 2. RNA 5'-end directed cleavage 13-19 nucleotides from the RNA end. 3. DNA 3'-end directed cleavage 15-20 nucleotides away from the primer terminus.. It carries out the reaction 3'-end directed exonucleolytic cleavage of viral RNA-DNA hybrid.. The enzyme catalyses DNA(n) + a 2'-deoxyribonucleoside 5'-triphosphate = DNA(n+1) + diphosphate. Its activity is regulated as follows. Protease: The viral protease is inhibited by many synthetic protease inhibitors (PIs), such as amprenavir, atazanavir, indinavir, loprinavir, nelfinavir, ritonavir and saquinavir. Use of protease inhibitors in tritherapy regimens permit more ambitious therapeutic strategies. Reverse transcriptase/ribonuclease H: RT can be inhibited either by nucleoside RT inhibitors (NRTIs) or by non nucleoside RT inhibitors (NNRTIs). NRTIs act as chain terminators, whereas NNRTIs inhibit DNA polymerization by binding a small hydrophobic pocket near the RT active site and inducing an allosteric change in this region. Classical NRTIs are abacavir, adefovir (PMEA), didanosine (ddI), lamivudine (3TC), stavudine (d4T), tenofovir (PMPA), zalcitabine (ddC), and zidovudine (AZT). Classical NNRTIs are atevirdine (BHAP U-87201E), delavirdine, efavirenz (DMP-266), emivirine (I-EBU), and nevirapine (BI-RG-587). The tritherapies used as a basic effective treatment of AIDS associate two NRTIs and one NNRTI. Mediates, with Gag polyprotein, the essential events in virion assembly, including binding the plasma membrane, making the protein-protein interactions necessary to create spherical particles, recruiting the viral Env proteins, and packaging the genomic RNA via direct interactions with the RNA packaging sequence (Psi). Gag-Pol polyprotein may regulate its own translation, by the binding genomic RNA in the 5'-UTR. At low concentration, the polyprotein would promote translation, whereas at high concentration, the polyprotein would encapsidate genomic RNA and then shut off translation. Functionally, targets the polyprotein to the plasma membrane via a multipartite membrane-binding signal, that includes its myristoylated N-terminus. Matrix protein is part of the pre-integration complex. Implicated in the release from host cell mediated by Vpu. Binds to RNA. Its function is as follows. Forms the conical core that encapsulates the genomic RNA-nucleocapsid complex in the virion. Most core are conical, with only 7% tubular. The core is constituted by capsid protein hexamer subunits. The core is disassembled soon after virion entry. Host restriction factors such as TRIM5-alpha or TRIMCyp bind retroviral capsids and cause premature capsid disassembly, leading to blocks in reverse transcription. Capsid restriction by TRIM5 is one of the factors which restricts HIV-1 to the human species. Host PIN1 apparently facilitates the virion uncoating. On the other hand, interactions with PDZD8 or CYPA stabilize the capsid. In terms of biological role, encapsulates and protects viral dimeric unspliced genomic RNA (gRNA). Binds these RNAs through its zinc fingers. Acts as a nucleic acid chaperone which is involved in rearangement of nucleic acid secondary structure during gRNA retrotranscription. Also facilitates template switch leading to recombination. As part of the polyprotein, participates in gRNA dimerization, packaging, tRNA incorporation and virion assembly. Aspartyl protease that mediates proteolytic cleavages of Gag and Gag-Pol polyproteins during or shortly after the release of the virion from the plasma membrane. Cleavages take place as an ordered, step-wise cascade to yield mature proteins. This process is called maturation. Displays maximal activity during the budding process just prior to particle release from the cell. Also cleaves Nef and Vif, probably concomitantly with viral structural proteins on maturation of virus particles. Hydrolyzes host EIF4GI and PABP1 in order to shut off the capped cellular mRNA translation. The resulting inhibition of cellular protein synthesis serves to ensure maximal viral gene expression and to evade host immune response. Also mediates cleavage of host YTHDF3. Mediates cleavage of host CARD8, thereby activating the CARD8 inflammasome, leading to the clearance of latent HIV-1 in patient CD4(+) T-cells after viral reactivation; in contrast, HIV-1 can evade CARD8-sensing when its protease remains inactive in infected cells prior to viral budding. Functionally, multifunctional enzyme that converts the viral RNA genome into dsDNA in the cytoplasm, shortly after virus entry into the cell. This enzyme displays a DNA polymerase activity that can copy either DNA or RNA templates, and a ribonuclease H (RNase H) activity that cleaves the RNA strand of RNA-DNA heteroduplexes in a partially processive 3' to 5' endonucleasic mode. Conversion of viral genomic RNA into dsDNA requires many steps. A tRNA(3)-Lys binds to the primer-binding site (PBS) situated at the 5'-end of the viral RNA. RT uses the 3' end of the tRNA primer to perform a short round of RNA-dependent minus-strand DNA synthesis. The reading proceeds through the U5 region and ends after the repeated (R) region which is present at both ends of viral RNA. The portion of the RNA-DNA heteroduplex is digested by the RNase H, resulting in a ssDNA product attached to the tRNA primer. This ssDNA/tRNA hybridizes with the identical R region situated at the 3' end of viral RNA. This template exchange, known as minus-strand DNA strong stop transfer, can be either intra- or intermolecular. RT uses the 3' end of this newly synthesized short ssDNA to perform the RNA-dependent minus-strand DNA synthesis of the whole template. RNase H digests the RNA template except for two polypurine tracts (PPTs) situated at the 5'-end and near the center of the genome. It is not clear if both polymerase and RNase H activities are simultaneous. RNase H probably can proceed both in a polymerase-dependent (RNA cut into small fragments by the same RT performing DNA synthesis) and a polymerase-independent mode (cleavage of remaining RNA fragments by free RTs). Secondly, RT performs DNA-directed plus-strand DNA synthesis using the PPTs that have not been removed by RNase H as primers. PPTs and tRNA primers are then removed by RNase H. The 3' and 5' ssDNA PBS regions hybridize to form a circular dsDNA intermediate. Strand displacement synthesis by RT to the PBS and PPT ends produces a blunt ended, linear dsDNA copy of the viral genome that includes long terminal repeats (LTRs) at both ends. Its function is as follows. Catalyzes viral DNA integration into the host chromosome, by performing a series of DNA cutting and joining reactions. This enzyme activity takes place after virion entry into a cell and reverse transcription of the RNA genome in dsDNA. The first step in the integration process is 3' processing. This step requires a complex comprising the viral genome, matrix protein, Vpr and integrase. This complex is called the pre-integration complex (PIC). The integrase protein removes 2 nucleotides from each 3' end of the viral DNA, leaving recessed CA OH's at the 3' ends. In the second step, the PIC enters cell nucleus. This process is mediated through integrase and Vpr proteins, and allows the virus to infect a non dividing cell. This ability to enter the nucleus is specific of lentiviruses, other retroviruses cannot and rely on cell division to access cell chromosomes. In the third step, termed strand transfer, the integrase protein joins the previously processed 3' ends to the 5' ends of strands of target cellular DNA at the site of integration. The 5'-ends are produced by integrase-catalyzed staggered cuts, 5 bp apart. A Y-shaped, gapped, recombination intermediate results, with the 5'-ends of the viral DNA strands and the 3' ends of target DNA strands remaining unjoined, flanking a gap of 5 bp. The last step is viral DNA integration into host chromosome. This involves host DNA repair synthesis in which the 5 bp gaps between the unjoined strands are filled in and then ligated. Since this process occurs at both cuts flanking the HIV genome, a 5 bp duplication of host DNA is produced at the ends of HIV-1 integration. Alternatively, Integrase may catalyze the excision of viral DNA just after strand transfer, this is termed disintegration. The protein is Gag-Pol polyprotein (gag-pol) of Homo sapiens (Human).